The primary structure comprises 555 residues: Connector enhancer of kinase suppressor of ras 3 (555 aa).

Residues 7 to 72 (WSPKQVVDWT…LEAVDLLCAL (66 aa)) form the SAM domain. The region spanning 80–174 (TMKNLVLKLR…TAVQKDCLIA (95 aa)) is the CRIC domain. One can recognise a PDZ domain in the interval 211 to 293 (EVHLPNVRPG…GVVLLLKKRP (83 aa)). Disordered regions lie at residues 308 to 333 (RWKPPLVQTSPPPTTTQSPESTMDAS), 362 to 389 (SFGYRGHSKSKQPLPVRKGSESPNSFLD), and 518 to 538 (PFQEEGSKKKSASSSAKASSG). A compositionally biased stretch (low complexity) spans 311–329 (PPLVQTSPPPTTTQSPEST). The 222-residue stretch at 325-546 (SPESTMDASL…SGEPSLLVSW (222 aa)) folds into the DUF1170 domain. Phosphoserine is present on residues Ser381 and Ser383.

Belongs to the CNKSR family. In terms of assembly, interacts with epithelial sodium channel ENaC. Interacts directly with SCNN1A (ENaC subunit alpha) and SCNN1B (ENaC subunit beta) C-terminal tails. Interacts with ENaC regulatory proteins NEDD4L, RAF1 and SGK1. As to expression, expressed in kidney.

It localises to the cytoplasm. Its subcellular location is the apical cell membrane. Functionally, involved in transepithelial sodium transport. Regulates aldosterone-induced and epithelial sodium channel (ENaC)-mediated sodium transport through regulation of ENaC cell surface expression. Acts as a scaffold protein coordinating the assembly of an ENaC-regulatory complex (ERC). The protein is Connector enhancer of kinase suppressor of ras 3 (Cnksr3) of Mus musculus (Mouse).